Reading from the N-terminus, the 304-residue chain is Proteasome subunit beta (304 aa).

A propeptide spans 1–65 (MTWPHFEQLA…LTPTDAVPHG (65 aa)) (removed in mature form; by autocatalysis). Thr66 functions as the Nucleophile in the catalytic mechanism.

Belongs to the peptidase T1B family. The 20S proteasome core is composed of 14 alpha and 14 beta subunits that assemble into four stacked heptameric rings, resulting in a barrel-shaped structure. The two inner rings, each composed of seven catalytic beta subunits, are sandwiched by two outer rings, each composed of seven alpha subunits. The catalytic chamber with the active sites is on the inside of the barrel. Has a gated structure, the ends of the cylinder being occluded by the N-termini of the alpha-subunits. Is capped by the proteasome-associated ATPase, ARC.

It localises to the cytoplasm. It catalyses the reaction Cleavage of peptide bonds with very broad specificity.. Its pathway is protein degradation; proteasomal Pup-dependent pathway. With respect to regulation, the formation of the proteasomal ATPase ARC-20S proteasome complex, likely via the docking of the C-termini of ARC into the intersubunit pockets in the alpha-rings, may trigger opening of the gate for substrate entry. Interconversion between the open-gate and close-gate conformations leads to a dynamic regulation of the 20S proteasome proteolysis activity. In terms of biological role, component of the proteasome core, a large protease complex with broad specificity involved in protein degradation. This Mycobacterium sp. (strain JLS) protein is Proteasome subunit beta.